A 276-amino-acid chain; its full sequence is ATP synthase subunit delta (276 aa).

The protein belongs to the ATPase delta chain family. F-type ATPases have 2 components, F(1) - the catalytic core - and F(0) - the membrane proton channel. F(1) has five subunits: alpha(3), beta(3), gamma(1), delta(1), epsilon(1). F(0) has three main subunits: a(1), b(2) and c(10-14). The alpha and beta chains form an alternating ring which encloses part of the gamma chain. F(1) is attached to F(0) by a central stalk formed by the gamma and epsilon chains, while a peripheral stalk is formed by the delta and b chains.

Its subcellular location is the cell membrane. In terms of biological role, f(1)F(0) ATP synthase produces ATP from ADP in the presence of a proton or sodium gradient. F-type ATPases consist of two structural domains, F(1) containing the extramembraneous catalytic core and F(0) containing the membrane proton channel, linked together by a central stalk and a peripheral stalk. During catalysis, ATP synthesis in the catalytic domain of F(1) is coupled via a rotary mechanism of the central stalk subunits to proton translocation. This protein is part of the stalk that links CF(0) to CF(1). It either transmits conformational changes from CF(0) to CF(1) or is implicated in proton conduction. This Frankia casuarinae (strain DSM 45818 / CECT 9043 / HFP020203 / CcI3) protein is ATP synthase subunit delta.